We begin with the raw amino-acid sequence, 160 residues long: UPF0260 protein Rleg2_0895 (160 aa).

The protein belongs to the UPF0260 family.

In Rhizobium leguminosarum bv. trifolii (strain WSM2304), this protein is UPF0260 protein Rleg2_0895.